The sequence spans 447 residues: Asparagine--tRNA ligase (447 aa).

Belongs to the class-II aminoacyl-tRNA synthetase family. Homodimer.

The protein localises to the cytoplasm. It catalyses the reaction tRNA(Asn) + L-asparagine + ATP = L-asparaginyl-tRNA(Asn) + AMP + diphosphate + H(+). This is Asparagine--tRNA ligase from Lactococcus lactis subsp. lactis (strain IL1403) (Streptococcus lactis).